The primary structure comprises 104 residues: Large ribosomal subunit protein bL28 (104 aa).

Belongs to the bacterial ribosomal protein bL28 family.

The sequence is that of Large ribosomal subunit protein bL28 from Wolbachia pipientis wMel.